Here is a 113-residue protein sequence, read N- to C-terminus: Large ribosomal subunit protein bL17 (113 aa).

Belongs to the bacterial ribosomal protein bL17 family. As to quaternary structure, part of the 50S ribosomal subunit. Contacts protein L32.

This chain is Large ribosomal subunit protein bL17, found in Alkaliphilus metalliredigens (strain QYMF).